A 201-amino-acid polypeptide reads, in one-letter code: Calcium channel flower (201 aa).

3 helical membrane passes run 37 to 57 (LGIV…LSII), 59 to 79 (LSVS…VVMA), and 103 to 120 (PMYF…PPIF).

The protein belongs to the calcium channel flower family. Homomultimer. Associates with the dally/ magu complex.

It is found in the cell membrane. It localises to the cytoplasmic vesicle. The protein resides in the secretory vesicle. The protein localises to the synaptic vesicle membrane. Its subcellular location is the presynaptic cell membrane. It is found in the endosome. Its activity is regulated as follows. Channel activity is inhibited by La(3+), which reduces Ca(2+) influx and thus inhibits it's function in promoting activity-dependent bulk endocytosis (ADBE) in response to high stimuli. Functionally, transmembrane protein which mediates synaptic endocytosis, fitness-based cell culling, neuronal culling, morphogen gradient scaling, and calcium transport. Regulates synaptic endocytosis and hence couples exo- with endocytosis. Controls two major modes of synaptic vesicle (SV) endocytosis in the synaptic boutons of neuromuscular junctions (NMJs); Ca(2+) channel-independent Clathrin-mediated endocytosis (CME) in response to mild stimulation, and Ca(2+) channel-dependent activity-dependent bulk endocytosis (ADBE) in response to strong stimulation. Functions in ADBE and subsequent SV reformation from bulk endosomes by initiating Ca(2+) channel-dependent phosphatidylinositol 4,5-bisphosphate (PtdIns(4,5)P2) compartmentalization in synaptic boutons. There it acts at the periactive zone to provide the low Ca(2+) levels required to initiate Calcineurin activation and upregulate PtdIns(4,5)P2. Conversely PtdIns(4,5)P2 enhances fwe Ca(2+) channel-activity, establishing a positive feedback loop that induces PtdIns(4,5)P2 microdomain at the periactive zone. These microdomains trigger bulk membrane invagination (i.e. ADBE) by triggering actin polymerization while also promoting localization of fwe to bulk endosomes, thereby removing the ADBE trigger to reduce endocytosis and prevent excess membrane uptake. PtdIns(4,5)P2 then promotes SV reformation from the bulk endosomes, to coordinate ADBE and subsequent SV reformation. Different combinations of the flower isoforms at the cell membrane are also required for the identification and elimination of suboptimal or supernumerary cells during development, regeneration, and adulthood. Required for the recognition and elimination of unfit cells in the developing wing during cell competition. In the developing pupal retina, mediates the elimination of unwanted postmitotic neurons, including supernumerary photoreceptor neurons that form at the periphery of the retina and are contained within incomplete ommatidia units. Also required for efficient elimination and replacement of old neurons by newly generated neurons during regeneration in the adult brain following mechanical injury. Downstream of the flower fitness fingerprints, cells identified as unwanted or unfit are eliminated via apoptosis through the expression of ahuizotl (azot). However, the cells marked for elimination by the flower isoforms only undergo apoptosis if additional thresholds are met; (1) their neighboring fit/healthy cells express different levels of the fwe isoforms, and (2) the levels of the protective signal SPARC expressed by the loser or unwanted cells are unable to inhibit caspase activation. These additional thresholds for flower-mediated apoptosis, allows useful cells to recover from transient and limited stress before they are unnecessarily eliminated. Functions with dally and magu in a mechanism of scaling, which utilises apoptosis to ensure that the dpp morphogen gradient, which mediates organ growth, remains proportional to the size of the growing wing. In this mechanism, fwe represses dally- and Magu-dependent activity in expanding the gradient, and dally/Magu inhibits fwe-dependent apoptosis to keep cell death rate low. When the levels of these different proteins are optimally regulated the gradient correctly scales with organ growth but when this fails, fwe-mediated apoptosis is activated to trim the developing tissue to match the correct size of the gradient. The polypeptide is Calcium channel flower (Drosophila willistoni (Fruit fly)).